Consider the following 429-residue polypeptide: 4-hydroxyphenylacetate degradation bifunctional isomerase/decarboxylase (429 aa).

Approximate repeat units follow at residues 1–215 and 216–429; these read MKGT…RKSF and PTLP…ETAK. 3 residues coordinate a divalent metal cation: Glu-276, Glu-278, and Asp-307.

This sequence belongs to the FAH family. In terms of assembly, monomer. The cofactor is Mg(2+).

It carries out the reaction (2E,4Z)-5-hydroxypenta-2,4-diene-1,2,5-tricarboxylate = (3E,5R)-5-carboxy-2-oxohept-3-enedioate. The enzyme catalyses (3E,5R)-5-carboxy-2-oxohept-3-enedioate + H(+) = (4Z)-2-oxohept-4-enedioate + CO2. The protein operates within aromatic compound metabolism; 4-hydroxyphenylacetate degradation; pyruvate and succinate semialdehyde from 4-hydroxyphenylacetate: step 4/7. It participates in aromatic compound metabolism; 4-hydroxyphenylacetate degradation; pyruvate and succinate semialdehyde from 4-hydroxyphenylacetate: step 5/7. Decarboxylates OPET (5-oxo-pent-3-ene-1,2,5-tricarboxylic acid) into HHDD (2-hydroxy-hept-2,4-diene-1,7-dioate) and isomerizes it to OHED (2-oxo-hept-3-ene-1,7-dioate). The chain is 4-hydroxyphenylacetate degradation bifunctional isomerase/decarboxylase (hpaG) from Escherichia coli.